We begin with the raw amino-acid sequence, 363 residues long: Ribosomal RNA large subunit methyltransferase M (363 aa).

Residues Ser190, Cys223–Gly226, Asp242, Asp262, and Asp279 each bind S-adenosyl-L-methionine. Catalysis depends on Lys308, which acts as the Proton acceptor.

It belongs to the class I-like SAM-binding methyltransferase superfamily. RNA methyltransferase RlmE family. RlmM subfamily. Monomer.

Its subcellular location is the cytoplasm. The enzyme catalyses cytidine(2498) in 23S rRNA + S-adenosyl-L-methionine = 2'-O-methylcytidine(2498) in 23S rRNA + S-adenosyl-L-homocysteine + H(+). Catalyzes the 2'-O-methylation at nucleotide C2498 in 23S rRNA. The polypeptide is Ribosomal RNA large subunit methyltransferase M (Aliivibrio salmonicida (strain LFI1238) (Vibrio salmonicida (strain LFI1238))).